A 426-amino-acid polypeptide reads, in one-letter code: Multifunctional protein ADE2 (426 aa).

Residues 1–261 (MAPAASELKL…WVAERVELLL (261 aa)) are SAICAR synthetase. The AIR carboxylase stretch occupies residues 262 to 426 (KTKSQGRVVV…ADKKLRECTL (165 aa)).

This sequence in the N-terminal section; belongs to the SAICAR synthetase family. It in the C-terminal section; belongs to the AIR carboxylase family. Class II subfamily. As to quaternary structure, homooctamer.

It carries out the reaction 5-amino-1-(5-phospho-D-ribosyl)imidazole-4-carboxylate + L-aspartate + ATP = (2S)-2-[5-amino-1-(5-phospho-beta-D-ribosyl)imidazole-4-carboxamido]succinate + ADP + phosphate + 2 H(+). The catalysed reaction is 5-amino-1-(5-phospho-D-ribosyl)imidazole-4-carboxylate + H(+) = 5-amino-1-(5-phospho-beta-D-ribosyl)imidazole + CO2. It functions in the pathway purine metabolism; IMP biosynthesis via de novo pathway; 5-amino-1-(5-phospho-D-ribosyl)imidazole-4-carboxamide from 5-amino-1-(5-phospho-D-ribosyl)imidazole-4-carboxylate: step 1/2. Its pathway is purine metabolism; IMP biosynthesis via de novo pathway; 5-amino-1-(5-phospho-D-ribosyl)imidazole-4-carboxylate from 5-amino-1-(5-phospho-D-ribosyl)imidazole (carboxylase route): step 1/1. In Gallus gallus (Chicken), this protein is Multifunctional protein ADE2 (AIRC).